The sequence spans 154 residues: MANQDDKIKIITDNRQARHLYEILETFEAGVQLLGTEVKSVRAGKVNLRDGYVLVRNGEAVLINVHISPYEQSSEYFNHDPRRTRKLLMHKKEISKLIGQVEQKGLTLVPLKMYFKGSWVKISIGLGRGKKLHDKREDLKRRQDQRDMARAMKR.

A disordered region spans residues 135–154 (KREDLKRRQDQRDMARAMKR).

It belongs to the SmpB family.

It is found in the cytoplasm. Functionally, required for rescue of stalled ribosomes mediated by trans-translation. Binds to transfer-messenger RNA (tmRNA), required for stable association of tmRNA with ribosomes. tmRNA and SmpB together mimic tRNA shape, replacing the anticodon stem-loop with SmpB. tmRNA is encoded by the ssrA gene; the 2 termini fold to resemble tRNA(Ala) and it encodes a 'tag peptide', a short internal open reading frame. During trans-translation Ala-aminoacylated tmRNA acts like a tRNA, entering the A-site of stalled ribosomes, displacing the stalled mRNA. The ribosome then switches to translate the ORF on the tmRNA; the nascent peptide is terminated with the 'tag peptide' encoded by the tmRNA and targeted for degradation. The ribosome is freed to recommence translation, which seems to be the essential function of trans-translation. This Microcystis aeruginosa (strain NIES-843 / IAM M-2473) protein is SsrA-binding protein.